The chain runs to 190 residues: Probable oligoribonuclease (190 aa).

The region spanning 19-181 (MVWVDLEMTG…QDIEESIEEL (163 aa)) is the Exonuclease domain. Tyr-140 is an active-site residue.

The protein belongs to the oligoribonuclease family.

3'-to-5' exoribonuclease specific for small oligoribonucleotides. This chain is Probable oligoribonuclease (rexo2-1), found in Dictyostelium discoideum (Social amoeba).